A 492-amino-acid chain; its full sequence is Glutamyl-tRNA(Gln) amidotransferase subunit A (492 aa).

Catalysis depends on charge relay system residues lysine 79 and serine 154. The active-site Acyl-ester intermediate is serine 178.

It belongs to the amidase family. GatA subfamily. As to quaternary structure, heterotrimer of A, B and C subunits.

The catalysed reaction is L-glutamyl-tRNA(Gln) + L-glutamine + ATP + H2O = L-glutaminyl-tRNA(Gln) + L-glutamate + ADP + phosphate + H(+). Functionally, allows the formation of correctly charged Gln-tRNA(Gln) through the transamidation of misacylated Glu-tRNA(Gln) in organisms which lack glutaminyl-tRNA synthetase. The reaction takes place in the presence of glutamine and ATP through an activated gamma-phospho-Glu-tRNA(Gln). The polypeptide is Glutamyl-tRNA(Gln) amidotransferase subunit A (Acinetobacter baumannii (strain AB0057)).